Consider the following 360-residue polypeptide: MFKREETKPVFVGGVQIGGQKSVVIQSMTTADTRDVEKTLAEIQRLHDVGCQIVRLAVINEDAARAIKKIKERSPLPLVADIHFDHKLALIALESGIDKIRINPGNIGSKEKTQRVVEACRERNVPIRIGVNSGSVEKRLLDKYGYPSPEAIVESAMDHVQILEDLNYDNIVISLKSSDVPTMIQTYSLMAQKRNYPLHVGVTEAGTQFSGSIKSSVGIGTVLSMGIGDTIRVSLTADPVEEIKVAKQILRSLDIVNNDPVVIACPSCGRCAIDLIGLATKVEDAVSTLKVPLKVAVMGCAVNGPGEAREADVGVAGGNGEGLIFRNGEIVRKVKETELFEELMKEINEIVNEQKPTTVG.

Residues Cys265, Cys268, Cys300, and Glu307 each contribute to the [4Fe-4S] cluster site.

This sequence belongs to the IspG family. [4Fe-4S] cluster serves as cofactor.

It carries out the reaction (2E)-4-hydroxy-3-methylbut-2-enyl diphosphate + oxidized [flavodoxin] + H2O + 2 H(+) = 2-C-methyl-D-erythritol 2,4-cyclic diphosphate + reduced [flavodoxin]. The protein operates within isoprenoid biosynthesis; isopentenyl diphosphate biosynthesis via DXP pathway; isopentenyl diphosphate from 1-deoxy-D-xylulose 5-phosphate: step 5/6. Its function is as follows. Converts 2C-methyl-D-erythritol 2,4-cyclodiphosphate (ME-2,4cPP) into 1-hydroxy-2-methyl-2-(E)-butenyl 4-diphosphate. The protein is 4-hydroxy-3-methylbut-2-en-1-yl diphosphate synthase (flavodoxin) of Brevibacillus brevis (strain 47 / JCM 6285 / NBRC 100599).